Consider the following 401-residue polypeptide: Acetate kinase (401 aa).

A Mg(2+)-binding site is contributed by Asn-7. Lys-14 serves as a coordination point for ATP. Position 91 (Arg-91) interacts with substrate. Asp-148 acts as the Proton donor/acceptor in catalysis. ATP is bound by residues 208–212, 283–285, and 332–336; these read HLGNG, DFR, and GVGEN. Glu-385 lines the Mg(2+) pocket.

This sequence belongs to the acetokinase family. In terms of assembly, homodimer. Requires Mg(2+) as cofactor. Mn(2+) serves as cofactor.

The protein localises to the cytoplasm. It carries out the reaction acetate + ATP = acetyl phosphate + ADP. The protein operates within metabolic intermediate biosynthesis; acetyl-CoA biosynthesis; acetyl-CoA from acetate: step 1/2. In terms of biological role, catalyzes the formation of acetyl phosphate from acetate and ATP. Can also catalyze the reverse reaction. This is Acetate kinase from Caldanaerobacter subterraneus subsp. tengcongensis (strain DSM 15242 / JCM 11007 / NBRC 100824 / MB4) (Thermoanaerobacter tengcongensis).